The primary structure comprises 150 residues: Small heat shock protein IbpB (150 aa).

The region spanning 26 to 137 (SQEPIDFPPY…QPQRIAIGGG (112 aa)) is the sHSP domain.

The protein belongs to the small heat shock protein (HSP20) family. As to quaternary structure, homodimer. Forms homomultimers of about 100-150 subunits at optimal growth temperatures. Conformation changes to oligomers at high temperatures or high ionic concentrations. The decrease in size of the multimers is accompanied by an increase in chaperone activity.

It localises to the cytoplasm. Functionally, associates with aggregated proteins, together with IbpA, to stabilize and protect them from irreversible denaturation and extensive proteolysis during heat shock and oxidative stress. Aggregated proteins bound to the IbpAB complex are more efficiently refolded and reactivated by the ATP-dependent chaperone systems ClpB and DnaK/DnaJ/GrpE. Its activity is ATP-independent. In Pectobacterium atrosepticum (strain SCRI 1043 / ATCC BAA-672) (Erwinia carotovora subsp. atroseptica), this protein is Small heat shock protein IbpB.